Consider the following 124-residue polypeptide: Quinol oxidase subunit 4 (124 aa).

The next 3 helical transmembrane spans lie at 16-36 (IVGF…AVYT), 44-64 (LWII…MFMH), and 78-98 (TLFG…IFAA).

Belongs to the cytochrome c oxidase bacterial subunit 4 family.

It localises to the cell membrane. It catalyses the reaction 2 a quinol + O2 = 2 a quinone + 2 H2O. Functionally, catalyzes quinol oxidation with the concomitant reduction of oxygen to water. Major component for energy conversion during vegetative growth. This is Quinol oxidase subunit 4 (qoxD) from Bacillus subtilis (strain 168).